The sequence spans 243 residues: Large ribosomal subunit protein uL2 (243 aa).

The segment at 202–243 is disordered; it reads HGGGRHQHVGQSSTVSRNAPPGAKVGSIAARKTGRAKIKDRR. Basic residues predominate over residues 233–243; sequence KTGRAKIKDRR.

It belongs to the universal ribosomal protein uL2 family. In terms of assembly, part of the 50S ribosomal subunit. Forms a bridge to the 30S subunit in the 70S ribosome.

In terms of biological role, one of the primary rRNA binding proteins. Required for association of the 30S and 50S subunits to form the 70S ribosome, for tRNA binding and peptide bond formation. It has been suggested to have peptidyltransferase activity; this is somewhat controversial. Makes several contacts with the 16S rRNA in the 70S ribosome. The chain is Large ribosomal subunit protein uL2 from Cenarchaeum symbiosum (strain A).